The primary structure comprises 92 residues: Small ribosomal subunit protein uS19 (92 aa).

This sequence belongs to the universal ribosomal protein uS19 family.

Functionally, protein S19 forms a complex with S13 that binds strongly to the 16S ribosomal RNA. The sequence is that of Small ribosomal subunit protein uS19 from Rhizobium etli (strain CIAT 652).